A 221-amino-acid chain; its full sequence is 7-cyano-7-deazaguanine synthase (221 aa).

8–18 (LSGGMDSAAVI) provides a ligand contact to ATP. Zn(2+) is bound by residues cysteine 186, cysteine 196, cysteine 199, and cysteine 202.

It belongs to the QueC family. Zn(2+) is required as a cofactor.

The catalysed reaction is 7-carboxy-7-deazaguanine + NH4(+) + ATP = 7-cyano-7-deazaguanine + ADP + phosphate + H2O + H(+). It participates in purine metabolism; 7-cyano-7-deazaguanine biosynthesis. Functionally, catalyzes the ATP-dependent conversion of 7-carboxy-7-deazaguanine (CDG) to 7-cyano-7-deazaguanine (preQ(0)). In Stenotrophomonas maltophilia (strain R551-3), this protein is 7-cyano-7-deazaguanine synthase.